A 201-amino-acid chain; its full sequence is Small ribosomal subunit protein uS4c (201 aa).

In terms of domain architecture, S4 RNA-binding spans Met-89–Tyr-151.

The protein belongs to the universal ribosomal protein uS4 family. As to quaternary structure, part of the 30S ribosomal subunit. Contacts protein S5. The interaction surface between S4 and S5 is involved in control of translational fidelity.

It is found in the plastid. Its subcellular location is the chloroplast. Its function is as follows. One of the primary rRNA binding proteins, it binds directly to 16S rRNA where it nucleates assembly of the body of the 30S subunit. With S5 and S12 plays an important role in translational accuracy. In Phaseolus vulgaris (Kidney bean), this protein is Small ribosomal subunit protein uS4c (rps4).